Here is a 708-residue protein sequence, read N- to C-terminus: Retrotransposon-derived protein PEG10 (708 aa).

The stretch at Met1 to Pro50 forms a coiled coil. The disordered stretch occupies residues Met21–Ile74. A compositionally biased stretch (polar residues) spans Glu26–Lys36. Basic and acidic residues predominate over residues Leu37–Val48. A necessary for interaction with ACVRL1 region spans residues Glu76–Gly275. The CCHC-type zinc finger occupies Asn293–Ala310. The disordered stretch occupies residues Ala310–Ala344. Glycyl lysine isopeptide (Lys-Gly) (interchain with G-Cter in ubiquitin) cross-links involve residues Lys311 and Lys314. Ser316 and Leu321 each carry phosphoserine. Omega-N-methylarginine is present on residues Arg507, Arg598, and Arg611. Positions Pro683–Leu708 are disordered.

In terms of assembly, homooligomer; homooligomerizes into virion-like capsids. Interacts with ACVRL1. Interacts with SIAH1 and SIAH2. Post-translationally, undergoes proteolytic cleavage. As to expression, expressed in the cytotrophoblast layer but not in the overlying syncytiotrophoblast of the placenta. Expressed in prostate and breast carcinomas but not in normal breast and prostate epithelial cells. Expressed in the Hep-G2 cell line (at protein level). Expressed in brain, liver, spleen, kidney, thymus, lung, ovary, testis, reactive lymph node, skeletal muscle, adipose tissue and placenta. Expressed in pancreatic and hepatocellular carcinomas (HCC).

It is found in the extracellular vesicle membrane. It localises to the cytoplasm. The protein localises to the nucleus. In terms of biological role, retrotransposon-derived protein that binds its own mRNA and self-assembles into virion-like capsids. Forms virion-like extracellular vesicles that encapsulate their own mRNA and are released from cells, enabling intercellular transfer of PEG10 mRNA. Binds its own mRNA in the 5'-UTR region, in the region near the boundary between the nucleocapsid (NC) and protease (PRO) coding sequences and in the beginning of the 3'-UTR region. Involved in placenta formation: required for trophoblast stem cells differentiation. Involved at the immediate early stage of adipocyte differentiation. Overexpressed in many cancers and enhances tumor progression: promotes cell proliferation by driving cell cycle progression from G0/G1. Enhances cancer progression by inhibiting the TGF-beta signaling, possibly via interaction with the TGF-beta receptor ACVRL1. May bind to the 5'-GCCTGTCTTT-3' DNA sequence of the MB1 domain in the myelin basic protein (MBP) promoter; additional evidences are however required to confirm this result. In Homo sapiens (Human), this protein is Retrotransposon-derived protein PEG10.